A 285-amino-acid polypeptide reads, in one-letter code: MSKTVNAYAKINLALFITGKLPNGYHTLETIFAPINWYDRLTFEPSETIEMACTNAELPTDDSNLCIKAAKRLQTESGSQKGVKISLEKNVPFGAGLGGGSSDAAATLNALNELWELSLPSETLHKLATELGADVPYFLEMPALALGTGIGEELTDLQVAFPFSIVTVFPETAISTAWAYQNFKQNFDRLLPDAATEIQIVCETGDLGRMQQFENDFESIVYENYAEVKKLRDDFVEAGSGFTRLSGSGSAVFGVFADDEKATACYEAMRKRYPTSLTPKSFKMK.

Residue lysine 10 is part of the active site. Position 92–102 (92–102) interacts with ATP; that stretch reads PFGAGLGGGSS. Aspartate 134 is a catalytic residue.

It belongs to the GHMP kinase family. IspE subfamily.

It catalyses the reaction 4-CDP-2-C-methyl-D-erythritol + ATP = 4-CDP-2-C-methyl-D-erythritol 2-phosphate + ADP + H(+). It participates in isoprenoid biosynthesis; isopentenyl diphosphate biosynthesis via DXP pathway; isopentenyl diphosphate from 1-deoxy-D-xylulose 5-phosphate: step 3/6. In terms of biological role, catalyzes the phosphorylation of the position 2 hydroxy group of 4-diphosphocytidyl-2C-methyl-D-erythritol. This chain is 4-diphosphocytidyl-2-C-methyl-D-erythritol kinase, found in Chloroherpeton thalassium (strain ATCC 35110 / GB-78).